Here is a 216-residue protein sequence, read N- to C-terminus: Maintenance of carboxysome distribution protein A (216 aa).

Residues glycine 18, glycine 19, glycine 21, lysine 22, threonine 23, threonine 24, and glutamine 47 each contribute to the ATP site. Threonine 23 contributes to the Mg(2+) binding site.

It belongs to the ParA family. McdA subfamily. Homodimerizes in the presence of ATP. Each subunit binds 1 ATP molecule; some residues cross the dimer interface to contact ATP in the other subunit. Forms a complex with McdB.

Its subcellular location is the cytoplasm. The protein resides in the nucleoid. The catalysed reaction is ATP + H2O = ADP + phosphate + H(+). In terms of biological role, mcdA and McdB together mediate carboxysome (Cb) spacing, size, ultrastructure and probably inheritance in the cell, together they prevent Cb aggregation. McdA is an ATPase that forms dynamic gradients on the nucleoid in response to adapter protein McdB, which associates with carboxysomes. The interplay between McdA gradients on the nucleoid and McdB-bound carboxysomes result in the equal spacing of Cbs along the cell length. Incorrect positioning (aggregation) of carboxysomes results in reduced CO(2) fixation by encapsulated ribulose-1,5-bisphosphate carboxylase (RuBisCO, cbbL/cbbS), which leads to slower growth. The polypeptide is Maintenance of carboxysome distribution protein A (Gloeobacter kilaueensis (strain ATCC BAA-2537 / CCAP 1431/1 / ULC 316 / JS1)).